Here is a 336-residue protein sequence, read N- to C-terminus: Protein-lysine N-methyltransferase EFM3 (336 aa).

S-adenosyl-L-methionine is bound by residues Trp-147, 173-175 (GTG), Asp-196, Leu-232, and Ala-251.

It belongs to the class I-like SAM-binding methyltransferase superfamily. EEF2KMT family.

It localises to the cytoplasm. In terms of biological role, S-adenosyl-L-methionine-dependent protein-lysine N-methyltransferase that methylates elongation factor 2. The chain is Protein-lysine N-methyltransferase EFM3 from Chaetomium thermophilum (strain DSM 1495 / CBS 144.50 / IMI 039719) (Thermochaetoides thermophila).